The chain runs to 337 residues: Phenylalanine--tRNA ligase alpha subunit (337 aa).

Glu252 provides a ligand contact to Mg(2+).

The protein belongs to the class-II aminoacyl-tRNA synthetase family. Phe-tRNA synthetase alpha subunit type 1 subfamily. As to quaternary structure, tetramer of two alpha and two beta subunits. Requires Mg(2+) as cofactor.

The protein resides in the cytoplasm. It carries out the reaction tRNA(Phe) + L-phenylalanine + ATP = L-phenylalanyl-tRNA(Phe) + AMP + diphosphate + H(+). This Francisella tularensis subsp. holarctica (strain OSU18) protein is Phenylalanine--tRNA ligase alpha subunit.